The primary structure comprises 642 residues: MPVITLPDGSKREFAHAVSTLDVAADIGPGLAKACIAGRVNGELKDACDLIETDAELSIITAKDEEGVEILRHSCAHLLGHAIKQMWPETKMAIGPVIDNGFYYDIDLEHKLTQDDIEALEKRMLQLAKTNYDVVKRVVSWQEARDTFAARGEEYKIAILDENISKDATPALYHHEEYTDMCRGPHVPNMRFCQHFKLMSIAGAYWRGNSENKMLQRIYGTAWADKKALSTHLTRLEEAAKRDHRKIGKQLDLYHMQEEAPGMVFWHNDGWSIFLELERFIRRKLNQYTYQEVKGPLMMDRVLWERSGHWDKYSEAMFTTSSENREYAIKPMNCPGHVQIFNQGLKSYRDLPLRMAEFGCCHRNEPSGSLHGLMRVRGFTQDDAHIFCTDDQVQEEVSACIQMVYDTYSTFGFENIVVKLSTRPEKRIGDDAMWDRAEEALKQALRANNIEFTLLPGEGAFYGPKIEFTLHDCLDRAWQCGTVQLDYALPNRLGATYVAEDNSRQTPVMIHRAILGSLERFLGILIEEYAGRFPTWLAPMQVVVMNITDKQADYVQEIVKFFKEQGIRASFDLRNEKIGFKIREHTLRRVPYLLVVGDQEMENKEVAVRTRDGIDLGKMRLEDFATKIHQQISLRSLKLLEE.

A TGS domain is found at 1–61 (MPVITLPDGS…ETDAELSIIT (61 aa)). Residues 243–534 (DHRKIGKQLD…LIEEYAGRFP (292 aa)) are catalytic. The Zn(2+) site is built by cysteine 334, histidine 385, and histidine 511.

It belongs to the class-II aminoacyl-tRNA synthetase family. In terms of assembly, homodimer. Zn(2+) serves as cofactor.

The protein resides in the cytoplasm. It carries out the reaction tRNA(Thr) + L-threonine + ATP = L-threonyl-tRNA(Thr) + AMP + diphosphate + H(+). Its function is as follows. Catalyzes the attachment of threonine to tRNA(Thr) in a two-step reaction: L-threonine is first activated by ATP to form Thr-AMP and then transferred to the acceptor end of tRNA(Thr). Also edits incorrectly charged L-seryl-tRNA(Thr). The sequence is that of Threonine--tRNA ligase from Shewanella sp. (strain W3-18-1).